A 435-amino-acid chain; its full sequence is Adenylosuccinate lyase (435 aa).

Residues 4-5 (RY), 73-75 (RHD), and 99-100 (TS) contribute to the N(6)-(1,2-dicarboxyethyl)-AMP site. The active-site Proton donor/acceptor is His-147. Residue Gln-218 participates in N(6)-(1,2-dicarboxyethyl)-AMP binding. The Proton donor/acceptor role is filled by Ser-268. N(6)-(1,2-dicarboxyethyl)-AMP is bound by residues Ser-269, 274–276 (KKN), Asn-282, and 313–317 (SAERV).

It belongs to the lyase 1 family. Adenylosuccinate lyase subfamily. As to quaternary structure, homotetramer. Residues from neighboring subunits contribute catalytic and substrate-binding residues to each active site.

The catalysed reaction is N(6)-(1,2-dicarboxyethyl)-AMP = fumarate + AMP. It catalyses the reaction (2S)-2-[5-amino-1-(5-phospho-beta-D-ribosyl)imidazole-4-carboxamido]succinate = 5-amino-1-(5-phospho-beta-D-ribosyl)imidazole-4-carboxamide + fumarate. Its pathway is purine metabolism; AMP biosynthesis via de novo pathway; AMP from IMP: step 2/2. It functions in the pathway purine metabolism; IMP biosynthesis via de novo pathway; 5-amino-1-(5-phospho-D-ribosyl)imidazole-4-carboxamide from 5-amino-1-(5-phospho-D-ribosyl)imidazole-4-carboxylate: step 2/2. In terms of biological role, catalyzes two reactions in de novo purine nucleotide biosynthesis. Catalyzes the breakdown of 5-aminoimidazole- (N-succinylocarboxamide) ribotide (SAICAR or 2-[5-amino-1-(5-phospho-beta-D-ribosyl)imidazole-4-carboxamido]succinate) to 5-aminoimidazole-4-carboxamide ribotide (AICAR or 5-amino-1-(5-phospho-beta-D-ribosyl)imidazole-4-carboxamide) and fumarate, and of adenylosuccinate (ADS or N(6)-(1,2-dicarboxyethyl)-AMP) to adenosine monophosphate (AMP) and fumarate. This Deinococcus radiodurans (strain ATCC 13939 / DSM 20539 / JCM 16871 / CCUG 27074 / LMG 4051 / NBRC 15346 / NCIMB 9279 / VKM B-1422 / R1) protein is Adenylosuccinate lyase (purB).